Consider the following 215-residue polypeptide: Probable nicotinate-nucleotide adenylyltransferase (215 aa).

It belongs to the NadD family.

The enzyme catalyses nicotinate beta-D-ribonucleotide + ATP + H(+) = deamido-NAD(+) + diphosphate. Its pathway is cofactor biosynthesis; NAD(+) biosynthesis; deamido-NAD(+) from nicotinate D-ribonucleotide: step 1/1. Catalyzes the reversible adenylation of nicotinate mononucleotide (NaMN) to nicotinic acid adenine dinucleotide (NaAD). The sequence is that of Probable nicotinate-nucleotide adenylyltransferase from Coxiella burnetii (strain RSA 331 / Henzerling II).